The chain runs to 195 residues: Peptidyl-tRNA hydrolase (195 aa).

Residue Tyr17 participates in tRNA binding. The active-site Proton acceptor is the His22. Positions 68, 70, and 116 each coordinate tRNA.

The protein belongs to the PTH family. As to quaternary structure, monomer.

Its subcellular location is the cytoplasm. It catalyses the reaction an N-acyl-L-alpha-aminoacyl-tRNA + H2O = an N-acyl-L-amino acid + a tRNA + H(+). Functionally, hydrolyzes ribosome-free peptidyl-tRNAs (with 1 or more amino acids incorporated), which drop off the ribosome during protein synthesis, or as a result of ribosome stalling. Catalyzes the release of premature peptidyl moieties from peptidyl-tRNA molecules trapped in stalled 50S ribosomal subunits, and thus maintains levels of free tRNAs and 50S ribosomes. This is Peptidyl-tRNA hydrolase from Erwinia tasmaniensis (strain DSM 17950 / CFBP 7177 / CIP 109463 / NCPPB 4357 / Et1/99).